The sequence spans 865 residues: Alanine--tRNA ligase (865 aa).

4 residues coordinate Zn(2+): His-554, His-558, Cys-656, and His-660.

It belongs to the class-II aminoacyl-tRNA synthetase family. The cofactor is Zn(2+).

Its subcellular location is the cytoplasm. The enzyme catalyses tRNA(Ala) + L-alanine + ATP = L-alanyl-tRNA(Ala) + AMP + diphosphate. Catalyzes the attachment of alanine to tRNA(Ala) in a two-step reaction: alanine is first activated by ATP to form Ala-AMP and then transferred to the acceptor end of tRNA(Ala). Also edits incorrectly charged Ser-tRNA(Ala) and Gly-tRNA(Ala) via its editing domain. This Francisella tularensis subsp. holarctica (strain LVS) protein is Alanine--tRNA ligase.